The chain runs to 407 residues: Methyltransferase/ribosomally synthesized type I borosin cyclic peptide precursor ceuMA2 (407 aa).

The methyltransferase domain stretch occupies residues 1–246; it reads MATTKTGSLT…TTSTLYIPPR (246 aa). Active-site residues include arginine 70, tyrosine 74, and tyrosine 96. The S-adenosyl-L-methionine site is built by tyrosine 96, histidine 98, valine 101, alanine 128, glutamine 170, glycine 208, serine 239, and threonine 240. The clasp domain stretch occupies residues 247 to 370; sequence EIAPVDQRIM…GPVYKVMRAT (124 aa). Residues 371-393 form a precursor leader region; the sequence is PAAIAAGQEHSLDEIAGSADSES. Threonine 399 and threonine 400 each carry N-methylthreonine. Position 401 is an N-methylisoleucine (isoleucine 401). Residues valine 402 and valine 403 each carry the N-methylvaline modification. The residue at position 404 (isoleucine 404) is an N-methylisoleucine. The residue at position 405 (valine 405) is an N-methylvaline. Position 406 is an N-methylhistidine (histidine 406).

It in the N-terminal section; belongs to the precorrin methyltransferase family. In terms of assembly, homodimer. In terms of processing, ceuMA2 automethylates at Thr-399, Thr-400, Ile-401, Val-402, Val-403, Ile-404, Val-405 and His-406 before being processed by a prolyloligopeptidase which likely forms a peptidyl ester upon removal of the follower propeptide, which then undergoes macrocyclization with the N-terminus of the modified core peptide. Peptide backbone alpha-N-methylations change the physicochemical properties of amide bonds to provide structural constraints and other favorable characteristics including biological membrane permeability to peptides.

The protein operates within secondary metabolite biosynthesis. Its function is as follows. Fusion protein of the methyltransferase ceuM2 and a type I borosin core peptide; part of the gene cluster that mediates the biosynthesis of a type I borosin, a highly methylated cyclic peptide with potent biological activities. Type I borosins derive from the C-terminus of the fusion protein, and it is the same protein that methylates its own C-terminus using S-adenosyl methionine (SAM). The C-terminus is subsequently cleaved off and macrocyclized by a prolyloligopeptidase to give the final product. This is Methyltransferase/ribosomally synthesized type I borosin cyclic peptide precursor ceuMA2 from Cerrena unicolor (Canker rot fungus).